Reading from the N-terminus, the 81-residue chain is Antimicrobial peptide D1 (81 aa).

The signal sequence occupies residues 1-31 (MAKTVLGIHVTFLTLLFAVLLLNDVMYTPVE). 4 cysteine pairs are disulfide-bonded: C34–C81, C45–C66, C51–C75, and C55–C77.

Functionally, antimicrobial peptide probably active against fungi like B.sorokiniana, F.oxysporum, F.graminearum, F.avenaceum, B.cinerea, P.beta, P.infestans and P.debaryanum. This is Antimicrobial peptide D1 from Stellaria media (Common chickweed).